An 82-amino-acid polypeptide reads, in one-letter code: ATP synthase subunit c, chloroplastic (82 aa).

A run of 2 helical transmembrane segments spans residues 7 to 27 and 57 to 77; these read GASV…PGIG and LAFM…LLFA.

Belongs to the ATPase C chain family. In terms of assembly, F-type ATPases have 2 components, F(1) - the catalytic core - and F(0) - the membrane proton channel. F(1) has five subunits: alpha(3), beta(3), gamma(1), delta(1), epsilon(1). F(0) has four main subunits: a(1), b(1), b'(1) and c(10-14). The alpha and beta chains form an alternating ring which encloses part of the gamma chain. F(1) is attached to F(0) by a central stalk formed by the gamma and epsilon chains, while a peripheral stalk is formed by the delta, b and b' chains.

The protein resides in the plastid. It is found in the chloroplast thylakoid membrane. Functionally, f(1)F(0) ATP synthase produces ATP from ADP in the presence of a proton or sodium gradient. F-type ATPases consist of two structural domains, F(1) containing the extramembraneous catalytic core and F(0) containing the membrane proton channel, linked together by a central stalk and a peripheral stalk. During catalysis, ATP synthesis in the catalytic domain of F(1) is coupled via a rotary mechanism of the central stalk subunits to proton translocation. Key component of the F(0) channel; it plays a direct role in translocation across the membrane. A homomeric c-ring of between 10-14 subunits forms the central stalk rotor element with the F(1) delta and epsilon subunits. In Emiliania huxleyi (Coccolithophore), this protein is ATP synthase subunit c, chloroplastic.